Consider the following 359-residue polypeptide: UDP-3-O-acylglucosamine N-acyltransferase (359 aa).

The active-site Proton acceptor is His-248.

The protein belongs to the transferase hexapeptide repeat family. LpxD subfamily. Homotrimer.

It catalyses the reaction a UDP-3-O-[(3R)-3-hydroxyacyl]-alpha-D-glucosamine + a (3R)-hydroxyacyl-[ACP] = a UDP-2-N,3-O-bis[(3R)-3-hydroxyacyl]-alpha-D-glucosamine + holo-[ACP] + H(+). It participates in bacterial outer membrane biogenesis; LPS lipid A biosynthesis. Its function is as follows. Catalyzes the N-acylation of UDP-3-O-acylglucosamine using 3-hydroxyacyl-ACP as the acyl donor. Is involved in the biosynthesis of lipid A, a phosphorylated glycolipid that anchors the lipopolysaccharide to the outer membrane of the cell. The polypeptide is UDP-3-O-acylglucosamine N-acyltransferase (Chlamydia abortus (strain DSM 27085 / S26/3) (Chlamydophila abortus)).